We begin with the raw amino-acid sequence, 66 residues long: Phylloseptin-H8 (66 aa).

An N-terminal signal peptide occupies residues 1-22 (MAFLKKSLFLVLFLGLVSLSIC). The propeptide occupies 23-44 (EEEKRETEEEENDQEEDDKSEE). The segment at 25-44 (EKRETEEEENDQEEDDKSEE) is disordered. A compositionally biased stretch (acidic residues) spans 30–41 (EEEENDQEEDDK). Residue Leu-65 is modified to Leucine amide.

Expressed by the skin glands.

The protein resides in the secreted. Has antimicrobial activity. This Pithecopus hypochondrialis (Orange-legged leaf frog) protein is Phylloseptin-H8.